The following is a 205-amino-acid chain: Putative 3-methyladenine DNA glycosylase (205 aa).

The protein belongs to the DNA glycosylase MPG family.

This is Putative 3-methyladenine DNA glycosylase from Bacillus cereus (strain AH187).